Consider the following 985-residue polypeptide: Vacuolar membrane protease (985 aa).

Residues 1-20 (MASSRAQRFNPIAFTPWPVT) are Cytoplasmic-facing. Residues 21–41 (CITTIVYLALLIPILVINLVV) form a helical membrane-spanning segment. Residues 42-388 (PSAPETNPKG…MFGTAFAVFR (347 aa)) lie on the Vacuolar side of the membrane. N-linked (GlcNAc...) asparagine glycans are attached at residues N53, N116, and N119. The Zn(2+) site is built by H175 and D187. Catalysis depends on E221, which acts as the Proton acceptor. E222 contacts Zn(2+). N238 carries N-linked (GlcNAc...) asparagine glycosylation. Zn(2+)-binding residues include E247 and H320. Residues 389-409 (LHTLFAISVALLVIAPLVIFV) traverse the membrane as a helical segment. Over 410–440 (TNRMYLFSMSKSLEGTGDQVSLRGLRGFSRT) the chain is Cytoplasmic. The helical transmembrane segment at 441–461 (PIILVTATTIPICLAYLLEKV) threads the bilayer. Residues 462–470 (NPYIVHSSQ) are Vacuolar-facing. Residues 471–491 (FSVWSMMFSAWIFLAWFLACA) form a helical membrane-spanning segment. The Cytoplasmic segment spans residues 492-502 (ADFFRPSALHR). The chain crosses the membrane as a helical span at residues 503-523 (AYSYTWIFIATWIMLVINTVY). At 524-527 (ANQK) the chain is on the vacuolar side. Residues 528–548 (GIAAGYFLLFYFAGAFLATWI) form a helical membrane-spanning segment. Residues 549 to 666 (SYLELFALPR…TLPRWTWVLQ (118 aa)) lie on the Cytoplasmic side of the membrane. The tract at residues 563–612 (ARQTTGRRPSSLSSRLLTSSADELRSNASPSTAEFPGAAGEDTDPTESTS) is disordered. Residues 566 to 582 (TTGRRPSSLSSRLLTSS) show a composition bias toward low complexity. The helical transmembrane segment at 667–687 (LLLLAPIVLILVGQLALFLTA) threads the bilayer. The Vacuolar segment spans residues 688-700 (SMCQVGSDGVSTF). The chain crosses the membrane as a helical span at residues 701–721 (VVYLACAVFTTLLCIPLFPLI). The Cytoplasmic segment spans residues 722 to 727 (HRFTYH). Residues 728–748 (IPTFLFLVFIGTLIYNLVAFP) form a helical membrane-spanning segment. Over 749 to 985 (FSPANRLKTF…VEASHSFTIQ (237 aa)) the chain is Vacuolar. N767, N795, and N839 each carry an N-linked (GlcNAc...) asparagine glycan.

The protein belongs to the peptidase M28 family. Requires Zn(2+) as cofactor.

It is found in the vacuole membrane. May be involved in vacuolar sorting and osmoregulation. The polypeptide is Vacuolar membrane protease (Ajellomyces capsulatus (strain G186AR / H82 / ATCC MYA-2454 / RMSCC 2432) (Darling's disease fungus)).